A 380-amino-acid chain; its full sequence is 1-deoxy-D-xylulose 5-phosphate reductoisomerase (380 aa).

8 residues coordinate NADPH: Thr10, Gly11, Ser12, Ile13, Gly36, Arg37, Asn38, and Asn120. A 1-deoxy-D-xylulose 5-phosphate-binding site is contributed by Lys121. Position 122 (Glu122) interacts with NADPH. Asp146 is a Mn(2+) binding site. Ser147, Glu148, Ser172, and His195 together coordinate 1-deoxy-D-xylulose 5-phosphate. A Mn(2+)-binding site is contributed by Glu148. Gly201 provides a ligand contact to NADPH. The 1-deoxy-D-xylulose 5-phosphate site is built by Ser208, Asn213, Lys214, and Glu217. Glu217 contacts Mn(2+).

Belongs to the DXR family. The cofactor is Mg(2+). It depends on Mn(2+) as a cofactor.

The catalysed reaction is 2-C-methyl-D-erythritol 4-phosphate + NADP(+) = 1-deoxy-D-xylulose 5-phosphate + NADPH + H(+). Its pathway is isoprenoid biosynthesis; isopentenyl diphosphate biosynthesis via DXP pathway; isopentenyl diphosphate from 1-deoxy-D-xylulose 5-phosphate: step 1/6. In terms of biological role, catalyzes the NADPH-dependent rearrangement and reduction of 1-deoxy-D-xylulose-5-phosphate (DXP) to 2-C-methyl-D-erythritol 4-phosphate (MEP). The polypeptide is 1-deoxy-D-xylulose 5-phosphate reductoisomerase (Listeria monocytogenes serovar 1/2a (strain ATCC BAA-679 / EGD-e)).